We begin with the raw amino-acid sequence, 549 residues long: Glucose-6-phosphate isomerase (549 aa).

Residue Glu353 is the Proton donor of the active site. Residues His384 and Lys513 contribute to the active site.

This sequence belongs to the GPI family.

The protein localises to the cytoplasm. It carries out the reaction alpha-D-glucose 6-phosphate = beta-D-fructose 6-phosphate. The protein operates within carbohydrate biosynthesis; gluconeogenesis. Its pathway is carbohydrate degradation; glycolysis; D-glyceraldehyde 3-phosphate and glycerone phosphate from D-glucose: step 2/4. Catalyzes the reversible isomerization of glucose-6-phosphate to fructose-6-phosphate. The polypeptide is Glucose-6-phosphate isomerase (Brucella suis (strain ATCC 23445 / NCTC 10510)).